We begin with the raw amino-acid sequence, 216 residues long: N-(5'-phosphoribosyl)anthranilate isomerase (216 aa).

This sequence belongs to the TrpF family.

The enzyme catalyses N-(5-phospho-beta-D-ribosyl)anthranilate = 1-(2-carboxyphenylamino)-1-deoxy-D-ribulose 5-phosphate. It functions in the pathway amino-acid biosynthesis; L-tryptophan biosynthesis; L-tryptophan from chorismate: step 3/5. This chain is N-(5'-phosphoribosyl)anthranilate isomerase, found in Leptospira borgpetersenii serovar Hardjo-bovis (strain JB197).